The sequence spans 278 residues: tRNA pseudouridine synthase A (278 aa).

The active-site Nucleophile is the Asp52. Tyr110 is a substrate binding site. Residues 259–278 form a disordered region; the sequence is SKRQNGTTKVEQPSSYVHEE. Over residues 261–278 the composition is skewed to polar residues; sequence RQNGTTKVEQPSSYVHEE.

It belongs to the tRNA pseudouridine synthase TruA family. In terms of assembly, homodimer.

The catalysed reaction is uridine(38/39/40) in tRNA = pseudouridine(38/39/40) in tRNA. Its function is as follows. Formation of pseudouridine at positions 38, 39 and 40 in the anticodon stem and loop of transfer RNAs. This chain is tRNA pseudouridine synthase A, found in Chloroflexus aurantiacus (strain ATCC 29366 / DSM 635 / J-10-fl).